The following is an 836-amino-acid chain: Protein IWS1 homolog A (836 aa).

The disordered stretch occupies residues 1-542 (MEADNYSPEH…DMKSGKMGDY (542 aa)). Composition is skewed to basic and acidic residues over residues 20–36 (QDERDSASDDEGNEQRS), 43–122 (HQSE…DRSP), 133–148 (EPVRHSASDSEDDVPR), 157–186 (DERHIKKTASDSEDEAPAKHRVSDTEDKAP), 206–218 (DSKDEAPPKHAAS), 288–309 (VPVKRAASDSEEETHPKGKASD), 370–386 (RSSESDSSDKVDGKKLQ), and 458–469 (ERKSKTETKSAD). Residues 476–485 (SDSENEEENL) show a composition bias toward acidic residues. Positions 533 to 542 (DMKSGKMGDY) are enriched in basic and acidic residues. Residues 631–709 (SAIKEWLTPL…NEWSRPIFGL (79 aa)) enclose the TFIIS N-terminal domain. A disordered region spans residues 714–746 (KGMTREEREQRDIEQMPQRRRMSSSGGQTPRRD). Residues 716-727 (MTREEREQRDIE) show a composition bias toward basic and acidic residues.

It belongs to the IWS1 family.

The protein resides in the nucleus. Transcription factor which plays a key role in defining the composition of the RNA polymerase II (RNAPII) elongation complex and in modulating the production of mature mRNA transcripts. The chain is Protein IWS1 homolog A (iws1-a) from Xenopus laevis (African clawed frog).